Consider the following 1400-residue polypeptide: Macrophage-stimulating protein receptor (1400 aa).

The signal sequence occupies residues 1-24; it reads MELLPPLPQSFLLLLLLPAKPAAG. Residues 25–957 are Extracellular-facing; it reads EDWQCPRTPY…PGPDGVPQST (933 aa). In terms of domain architecture, Sema spans 31–522; it reads RTPYAASRDF…SGDQVFQVPI (492 aa). Asn-66 carries N-linked (GlcNAc...) asparagine glycosylation. Intrachain disulfides connect Cys-101-Cys-104, Cys-107-Cys-162, Cys-135-Cys-143, Cys-174-Cys-177, Cys-300-Cys-367, Cys-385-Cys-407, and Cys-386-Cys-422. N-linked (GlcNAc...) asparagine glycans are attached at residues Asn-419, Asn-458, and Asn-488. 4 disulfide bridges follow: Cys-527/Cys-545, Cys-533/Cys-567, Cys-536/Cys-552, and Cys-548/Cys-558. 3 IPT/TIG domains span residues 569–671, 684–767, and 770–860; these read PKLT…FRVD, PVLI…FQYR, and PVVL…FRFL. 4 N-linked (GlcNAc...) asparagine glycosylation sites follow: Asn-654, Asn-720, Asn-841, and Asn-897. Residues 958–978 traverse the membrane as a helical segment; that stretch reads LLGILLPLLLLVAALATALVF. Over 979 to 1400 the chain is Cytoplasmic; it reads SYWWRRKQLV…RPLSEPPRPT (422 aa). The 264-residue stretch at 1082-1345 folds into the Protein kinase domain; it reads THSDRVIGKG…VLVGEVEQIV (264 aa). ATP is bound by residues 1088 to 1096, Lys-1114, and 1161 to 1164; these read IGKGHFGVV and LPYM. Asp-1208 acts as the Proton acceptor in catalysis. Position 1212 (Arg-1212) interacts with ATP. Phosphotyrosine; by autocatalysis is present on residues Tyr-1238, Tyr-1239, Tyr-1353, and Tyr-1360. Residues 1367–1400 form a disordered region; it reads TSHEMNVRPEQPQFSPMPGNVRRPRPLSEPPRPT.

It belongs to the protein kinase superfamily. Tyr protein kinase family. In terms of assembly, heterodimer of an alpha chain and a beta chain which are disulfide linked. Binds PLXNB1. Associates with and is negatively regulated by HYAL2. Interacts when phosphorylated with downstream effectors including PIK3R1, PCLG1, GRB2 and GAB1. Interacts with integrin beta1/ITGB1 in a ligand-independent fashion. In terms of processing, proteolytic processing yields the two subunits. Post-translationally, autophosphorylated in response to ligand binding on Tyr-1238 and Tyr-1239 in the kinase domain leading to further phosphorylation of Tyr-1353 and Tyr-1360 in the C-terminal multifunctional docking site. Ubiquitinated. Ubiquitination by CBL regulates the receptor stability and activity through proteasomal degradation. In terms of processing, O-mannosylation of IPT/TIG domains on Thr or Ser residues by TMEM260 is required for protein maturation. O-mannosylated residues are composed of single mannose glycans that are not elongated or modified. In terms of tissue distribution, expressed in colon, skin, lung and bone marrow.

It is found in the membrane. The catalysed reaction is L-tyrosyl-[protein] + ATP = O-phospho-L-tyrosyl-[protein] + ADP + H(+). With respect to regulation, in its inactive state, the C-terminal tail interacts with the catalytic domain and inhibits the kinase activity. Upon ligand binding, the C-terminal tail is displaced and becomes phosphorylated, thus increasing the kinase activity. Its function is as follows. Receptor tyrosine kinase that transduces signals from the extracellular matrix into the cytoplasm by binding to MST1 ligand. Regulates many physiological processes including cell survival, migration and differentiation. Ligand binding at the cell surface induces autophosphorylation of RON on its intracellular domain that provides docking sites for downstream signaling molecules. Following activation by ligand, interacts with the PI3-kinase subunit PIK3R1, PLCG1 or the adapter GAB1. Recruitment of these downstream effectors by RON leads to the activation of several signaling cascades including the RAS-ERK, PI3 kinase-AKT, or PLCgamma-PKC. RON signaling activates the wound healing response by promoting epithelial cell migration, proliferation as well as survival at the wound site. Also plays a role in the innate immune response by regulating the migration and phagocytic activity of macrophages. Alternatively, RON can also promote signals such as cell migration and proliferation in response to growth factors other than MST1 ligand. This is Macrophage-stimulating protein receptor (MST1R) from Homo sapiens (Human).